Here is a 199-residue protein sequence, read N- to C-terminus: Peroxiredoxin 2 (199 aa).

In terms of domain architecture, Thioredoxin spans 8–166 (AFIGQPAPNF…TLRLIQAFQF (159 aa)). Cysteine 53 serves as the catalytic Cysteine sulfenic acid (-SOH) intermediate.

It belongs to the peroxiredoxin family. AhpC/Prx1 subfamily. As to quaternary structure, homodimer; disulfide-linked, upon oxidation.

It carries out the reaction a hydroperoxide + [thioredoxin]-dithiol = an alcohol + [thioredoxin]-disulfide + H2O. In terms of biological role, thiol-specific peroxidase that catalyzes the reduction of hydrogen peroxide and organic hydroperoxides to water and alcohols, respectively. Plays a role in cell protection against oxidative stress by detoxifying peroxides and as sensor of hydrogen peroxide-mediated signaling events. This is Peroxiredoxin 2 (tsa-2) from Brugia malayi (Filarial nematode worm).